We begin with the raw amino-acid sequence, 156 residues long: MPRKGSVAKRDVLPDPVYNSKLVTRLINHLMIDGKRGKASTILYDAFDMIKKQTGNEPLDVFEEAMKNVMPVLEVKARRIGGSNYQVPIEVRPDRRTTLGLRWIVQYSRQRGEHTMDERLAKEIMDAANNTGAAVKKREDTHKMADANRAFAHYRW.

It belongs to the universal ribosomal protein uS7 family. As to quaternary structure, part of the 30S ribosomal subunit. Contacts proteins S9 and S11.

Its function is as follows. One of the primary rRNA binding proteins, it binds directly to 16S rRNA where it nucleates assembly of the head domain of the 30S subunit. Is located at the subunit interface close to the decoding center, probably blocks exit of the E-site tRNA. This chain is Small ribosomal subunit protein uS7, found in Lacticaseibacillus casei (strain BL23) (Lactobacillus casei).